Consider the following 236-residue polypeptide: NAD-dependent protein deacetylase (236 aa).

The region spanning 1-236 (MIKDWLQESN…EFLRSISNEG (236 aa)) is the Deacetylase sirtuin-type domain. Residues A18, T22, F29, R30, Q96, V98, D99, and H114 each contribute to the NAD(+) site. F29 lines the nicotinamide pocket. 2 residues coordinate nicotinamide: V98 and D99. H114 (proton acceptor) is an active-site residue. Residues C122, C125, C141, and C143 each contribute to the Zn(2+) site. Residues S181, S182, N206, and I225 each coordinate NAD(+).

This sequence belongs to the sirtuin family. Class U subfamily. Zn(2+) is required as a cofactor.

The protein resides in the cytoplasm. It carries out the reaction N(6)-acetyl-L-lysyl-[protein] + NAD(+) + H2O = 2''-O-acetyl-ADP-D-ribose + nicotinamide + L-lysyl-[protein]. Its function is as follows. NAD-dependent protein deacetylase which modulates the activities of several enzymes which are inactive in their acetylated form. In Oceanobacillus iheyensis (strain DSM 14371 / CIP 107618 / JCM 11309 / KCTC 3954 / HTE831), this protein is NAD-dependent protein deacetylase.